We begin with the raw amino-acid sequence, 611 residues long: Dual specificity protein phosphatase CDC14AB (611 aa).

The interval 23 to 178 (DLLGASEFIK…ALQHGFLNFE (156 aa)) is a. A linker region spans residues 179–192 (TFDVNEYEHYERVE). Residues 193–359 (NGDLNWITPG…HGDSLRSKQR (167 aa)) form a b region. Residues 194–352 (GDLNWITPGK…KQASLWAHGD (159 aa)) enclose the Tyrosine-protein phosphatase domain. Residue Cys-294 is the Phosphocysteine intermediate of the active site. The disordered stretch occupies residues 408–611 (KLRALKGRRQ…PSLQSEYVQY (204 aa)). Positions 456–490 (SPLKSSKVPASSSSSSSSSSVSASAKRIGRSSSSS) are enriched in low complexity. The span at 491–511 (TNLKSTRLASSLGNLYEPNTE) shows a compositional bias: polar residues. The span at 512 to 553 (SISSGKPPSPSSFTPHPVRTTYNYHYEVNNNNNQYSTTSSPS) shows a compositional bias: low complexity. Composition is skewed to polar residues over residues 554–569 (KSLG…SGAS) and 591–611 (GLST…YVQY).

This sequence belongs to the protein-tyrosine phosphatase family. Non-receptor class CDC14 subfamily.

The protein localises to the nucleus. The protein resides in the cytoplasm. Its subcellular location is the cytoskeleton. It is found in the microtubule organizing center. It localises to the centrosome. The protein localises to the spindle pole. The protein resides in the spindle. Its subcellular location is the cell projection. It is found in the kinocilium. It carries out the reaction O-phospho-L-tyrosyl-[protein] + H2O = L-tyrosyl-[protein] + phosphate. It catalyses the reaction O-phospho-L-seryl-[protein] + H2O = L-seryl-[protein] + phosphate. The enzyme catalyses O-phospho-L-threonyl-[protein] + H2O = L-threonyl-[protein] + phosphate. Functionally, dual-specificity phosphatase. Required for centrosome separation and productive cytokinesis during cell division. Dephosphorylates SIRT2 around early anaphase. May dephosphorylate the APC subunit FZR1/CDH1, thereby promoting APC-FZR1 dependent degradation of mitotic cyclins and subsequent exit from mitosis. The sequence is that of Dual specificity protein phosphatase CDC14AB (cdc14ab) from Danio rerio (Zebrafish).